We begin with the raw amino-acid sequence, 145 residues long: Flagellar assembly factor FliW (145 aa).

Belongs to the FliW family. In terms of assembly, interacts with translational regulator CsrA and flagellin(s).

The protein resides in the cytoplasm. Functionally, acts as an anti-CsrA protein, binds CsrA and prevents it from repressing translation of its target genes, one of which is flagellin. Binds to flagellin and participates in the assembly of the flagellum. In Exiguobacterium sp. (strain ATCC BAA-1283 / AT1b), this protein is Flagellar assembly factor FliW.